The primary structure comprises 268 residues: MLPSIVKHATSHKINPLKKHGQNFIFDSSLCDKIIRASNVLENSNVIEIGPGIGGLTRSILQKNPKSLTVIEIDERCIPLLNEIQEYYPNLNIIKQDVLKINLTDLIYDKVTVISNLPYHIGTELVIRLLKEVKLITNMTLMLQKEVVERICAIPSTKAYGRLSVICQILAKVEKCFNVAPTAFYPHPKVYSAIVKIIPLENPPSIALINKVEQITKLVFAGRRKMIKSSLRNLIPNIHEVLTQLKINCNDRAENLTPKDYLRIAMKL.

S-adenosyl-L-methionine contacts are provided by N23, I25, G50, E72, D97, and N116.

This sequence belongs to the class I-like SAM-binding methyltransferase superfamily. rRNA adenine N(6)-methyltransferase family. RsmA subfamily.

Its subcellular location is the cytoplasm. The enzyme catalyses adenosine(1518)/adenosine(1519) in 16S rRNA + 4 S-adenosyl-L-methionine = N(6)-dimethyladenosine(1518)/N(6)-dimethyladenosine(1519) in 16S rRNA + 4 S-adenosyl-L-homocysteine + 4 H(+). Its function is as follows. Specifically dimethylates two adjacent adenosines (A1518 and A1519) in the loop of a conserved hairpin near the 3'-end of 16S rRNA in the 30S particle. May play a critical role in biogenesis of 30S subunits. The sequence is that of Ribosomal RNA small subunit methyltransferase A from Rickettsia prowazekii (strain Madrid E).